The chain runs to 370 residues: Glutamate 5-kinase (370 aa).

Lys12 contacts ATP. Residues Ser52, Asp139, and Asn151 each contribute to the substrate site. Residues 171–172 (SD) and 213–219 (TGGMFTK) each bind ATP. Residues 278–356 (QAHIAVDAGA…SDIESILGYS (79 aa)) form the PUA domain.

This sequence belongs to the glutamate 5-kinase family.

It localises to the cytoplasm. The enzyme catalyses L-glutamate + ATP = L-glutamyl 5-phosphate + ADP. Its pathway is amino-acid biosynthesis; L-proline biosynthesis; L-glutamate 5-semialdehyde from L-glutamate: step 1/2. Functionally, catalyzes the transfer of a phosphate group to glutamate to form L-glutamate 5-phosphate. This Herpetosiphon aurantiacus (strain ATCC 23779 / DSM 785 / 114-95) protein is Glutamate 5-kinase.